A 378-amino-acid polypeptide reads, in one-letter code: Glutamate 5-kinase (378 aa).

ATP is bound at residue lysine 15. Residues serine 56, aspartate 143, and asparagine 155 each contribute to the substrate site. An ATP-binding site is contributed by 175-176 (SD). Positions 281–358 (KGTLTIDAGA…PDVAVILGIS (78 aa)) constitute a PUA domain.

It belongs to the glutamate 5-kinase family.

The protein localises to the cytoplasm. The enzyme catalyses L-glutamate + ATP = L-glutamyl 5-phosphate + ADP. Its pathway is amino-acid biosynthesis; L-proline biosynthesis; L-glutamate 5-semialdehyde from L-glutamate: step 1/2. In terms of biological role, catalyzes the transfer of a phosphate group to glutamate to form L-glutamate 5-phosphate. The chain is Glutamate 5-kinase from Bradyrhizobium sp. (strain BTAi1 / ATCC BAA-1182).